Reading from the N-terminus, the 397-residue chain is Galactokinase (397 aa).

Residues methionine 1–arginine 27 are disordered. The segment covering serine 9 to glycine 18 has biased composition (low complexity). Glutamate 36–aspartate 39 serves as a coordination point for substrate. Residues serine 69 and glycine 124 to serine 130 contribute to the ATP site. 2 residues coordinate Mg(2+): serine 130 and glutamate 161. Aspartate 173 functions as the Proton acceptor in the catalytic mechanism. Residue tyrosine 225 coordinates substrate.

It belongs to the GHMP kinase family. GalK subfamily.

It localises to the cytoplasm. The enzyme catalyses alpha-D-galactose + ATP = alpha-D-galactose 1-phosphate + ADP + H(+). It participates in carbohydrate metabolism; galactose metabolism. In terms of biological role, catalyzes the transfer of the gamma-phosphate of ATP to D-galactose to form alpha-D-galactose-1-phosphate (Gal-1-P). This is Galactokinase from Streptomyces lividans.